Reading from the N-terminus, the 304-residue chain is Acetylglutamate kinase (304 aa).

Substrate contacts are provided by residues 69–70 (GG), Arg91, and Asn202.

Belongs to the acetylglutamate kinase family. ArgB subfamily.

It localises to the cytoplasm. It catalyses the reaction N-acetyl-L-glutamate + ATP = N-acetyl-L-glutamyl 5-phosphate + ADP. The protein operates within amino-acid biosynthesis; L-arginine biosynthesis; N(2)-acetyl-L-ornithine from L-glutamate: step 2/4. Its function is as follows. Catalyzes the ATP-dependent phosphorylation of N-acetyl-L-glutamate. The chain is Acetylglutamate kinase from Caulobacter vibrioides (strain ATCC 19089 / CIP 103742 / CB 15) (Caulobacter crescentus).